A 179-amino-acid chain; its full sequence is ATP-dependent protease subunit HslV (179 aa).

Thr7 is an active-site residue. Na(+) is bound by residues Gly162, Cys165, and Thr168.

Belongs to the peptidase T1B family. HslV subfamily. In terms of assembly, a double ring-shaped homohexamer of HslV is capped on each side by a ring-shaped HslU homohexamer. The assembly of the HslU/HslV complex is dependent on binding of ATP.

It is found in the cytoplasm. It catalyses the reaction ATP-dependent cleavage of peptide bonds with broad specificity.. With respect to regulation, allosterically activated by HslU binding. Its function is as follows. Protease subunit of a proteasome-like degradation complex believed to be a general protein degrading machinery. The sequence is that of ATP-dependent protease subunit HslV from Bordetella avium (strain 197N).